Here is a 418-residue protein sequence, read N- to C-terminus: STE20-related kinase adapter protein beta (418 aa).

Residues 58–369 enclose the Protein kinase domain; the sequence is YELQVEIGRG…ASSLLSHVFF (312 aa). ATP contacts are provided by residues 64–72 and Lys89; that span reads IGRGFDNLT.

The protein belongs to the protein kinase superfamily. STE Ser/Thr protein kinase family. STE20 subfamily. As to quaternary structure, component of a trimeric complex composed of STK11/LKB1, STRAD (STRADA or STRADB) and CAB39/MO25 (CAB39/MO25alpha or CAB39L/MO25beta): the complex tethers STK11/LKB1 in the cytoplasm and stimulates its catalytic activity. Interacts with BIRC4/XIAP. These two proteins are likely to coexist in a complex with TAK1, TRAF6, TAB1 and TAB2. In terms of tissue distribution, highly expressed in heart, skeletal muscle, testis, liver and colon.

Its subcellular location is the nucleus. It is found in the cytoplasm. Its function is as follows. Pseudokinase which, in complex with CAB39/MO25 (CAB39/MO25alpha or CAB39L/MO25beta), binds to and activates STK11/LKB1. Adopts a closed conformation typical of active protein kinases and binds STK11/LKB1 as a pseudosubstrate, promoting conformational change of STK11/LKB1 in an active conformation. The polypeptide is STE20-related kinase adapter protein beta (STRADB) (Homo sapiens (Human)).